Consider the following 57-residue polypeptide: Large ribosomal subunit protein bL32 (57 aa).

The segment covering 1–19 (MATPKFKKSRANTHSRRSQ) has biased composition (basic residues). The tract at residues 1–20 (MATPKFKKSRANTHSRRSQW) is disordered.

Belongs to the bacterial ribosomal protein bL32 family.

This chain is Large ribosomal subunit protein bL32, found in Corynebacterium aurimucosum (strain ATCC 700975 / DSM 44827 / CIP 107346 / CN-1) (Corynebacterium nigricans).